The sequence spans 237 residues: Opacity protein opA57 (237 aa).

Residue Ala-1 is a signal peptide.

Belongs to the opacity porin family.

The protein localises to the cell outer membrane. Its function is as follows. Implicated in a number of adherence functions. OPA proteins are implicated in pathogenesis and are subject to phase variation. In Neisseria gonorrhoeae, this protein is Opacity protein opA57 (opaK).